The following is a 429-amino-acid chain: Homocysteine synthase (429 aa).

Lysine 210 bears the N6-(pyridoxal phosphate)lysine mark.

This sequence belongs to the trans-sulfuration enzymes family. In terms of assembly, homotetramer. Pyridoxal 5'-phosphate serves as cofactor.

The protein localises to the cytoplasm. Its subcellular location is the nucleus. The enzyme catalyses O-acetyl-L-homoserine + methanethiol = L-methionine + acetate + H(+). It carries out the reaction O-acetyl-L-homoserine + hydrogen sulfide = L-homocysteine + acetate. It participates in amino-acid biosynthesis; L-methionine biosynthesis via de novo pathway; L-homocysteine from O-acetyl-L-homoserine. Its function is as follows. Catalyzes the conversion of O-acetyl-L-homoserine (OAH) into homocysteine in the methionine biosynthesis pathway. Can also use O-succinyl-L-homoserine and L-homoserine as substrates. Also has cysteine synthase (O-acetylserine sulfhydrylase) activity in vitro, but in S.pombe, it seems only to be involved in the alternative pathway of methionine biosynthesis under cysteine deficiency conditions. In Schizosaccharomyces pombe (strain 972 / ATCC 24843) (Fission yeast), this protein is Homocysteine synthase.